The sequence spans 179 residues: ATP-dependent protease subunit HslV (179 aa).

T5 is an active-site residue. 3 residues coordinate Na(+): G164, C167, and T170.

It belongs to the peptidase T1B family. HslV subfamily. A double ring-shaped homohexamer of HslV is capped on each side by a ring-shaped HslU homohexamer. The assembly of the HslU/HslV complex is dependent on binding of ATP.

It localises to the cytoplasm. The enzyme catalyses ATP-dependent cleavage of peptide bonds with broad specificity.. Its activity is regulated as follows. Allosterically activated by HslU binding. In terms of biological role, protease subunit of a proteasome-like degradation complex believed to be a general protein degrading machinery. In Verminephrobacter eiseniae (strain EF01-2), this protein is ATP-dependent protease subunit HslV.